We begin with the raw amino-acid sequence, 230 residues long: MQQACIAIIIILLTVAAYLAMVKLYKRFPLPFLIPVLTTTILIVAALMMFHVSYEGYMIGGKWINSLLGPAVVALAYPLYKQWHIIVKHCVPILGGVLVGLCMGMISGLIFAEAFGIDHDLLLSILPKSITTPVAIQIAAGLGGVPSMTVVFVMIAGFSGVILGPLFLKWLRIRSSLGQGIALGSASHALGTSKALEYGELAVSMSSVSMTLCAVLGSFFGPLVVWLFHI.

A run of 6 helical transmembrane segments spans residues alanine 4–leucine 24, leucine 30–phenylalanine 50, leucine 67–valine 87, valine 91–phenylalanine 111, methionine 148–leucine 168, and methionine 210–isoleucine 230.

This sequence belongs to the YohK (E.coli)/YwbG (IPA-22R) (B.subtilis) family.

The protein resides in the cell membrane. This is an uncharacterized protein from Bacillus subtilis (strain 168).